The following is a 316-amino-acid chain: Acetyl-coenzyme A carboxylase carboxyl transferase subunit beta (316 aa).

Positions 39–308 (LWHKCSKCGV…TPPMVLWETM (270 aa)) constitute a CoA carboxyltransferase N-terminal domain. Zn(2+) contacts are provided by Cys-43, Cys-46, Cys-62, and Cys-65. A C4-type zinc finger spans residues 43–65 (CSKCGVLTYTKDLRANQMVCVEC).

This sequence belongs to the AccD/PCCB family. In terms of assembly, acetyl-CoA carboxylase is a heterohexamer composed of biotin carboxyl carrier protein (AccB), biotin carboxylase (AccC) and two subunits each of ACCase subunit alpha (AccA) and ACCase subunit beta (AccD). Zn(2+) is required as a cofactor.

It localises to the cytoplasm. The catalysed reaction is N(6)-carboxybiotinyl-L-lysyl-[protein] + acetyl-CoA = N(6)-biotinyl-L-lysyl-[protein] + malonyl-CoA. The protein operates within lipid metabolism; malonyl-CoA biosynthesis; malonyl-CoA from acetyl-CoA: step 1/1. In terms of biological role, component of the acetyl coenzyme A carboxylase (ACC) complex. Biotin carboxylase (BC) catalyzes the carboxylation of biotin on its carrier protein (BCCP) and then the CO(2) group is transferred by the transcarboxylase to acetyl-CoA to form malonyl-CoA. This chain is Acetyl-coenzyme A carboxylase carboxyl transferase subunit beta, found in Nostoc sp. (strain PCC 7120 / SAG 25.82 / UTEX 2576).